A 624-amino-acid polypeptide reads, in one-letter code: Coagulation factor XI (624 aa).

An N-terminal signal peptide occupies residues 1-18; that stretch reads MTSLHQVLYFIFFASVSS. 4 consecutive Apple domains span residues 20–103, 110–193, 200–283, and 291–376; these read CVTK…FKQC, CSKD…LKSC, CIRD…LQHC, and CHPS…LRLC. 17 disulfide bridges follow: cysteine 20–cysteine 103, cysteine 46–cysteine 76, cysteine 50–cysteine 56, cysteine 110–cysteine 193, cysteine 136–cysteine 165, cysteine 140–cysteine 146, cysteine 200–cysteine 283, cysteine 226–cysteine 255, cysteine 230–cysteine 236, cysteine 291–cysteine 376, cysteine 317–cysteine 348, cysteine 321–cysteine 327, cysteine 382–cysteine 499, cysteine 415–cysteine 431, cysteine 513–cysteine 580, cysteine 544–cysteine 559, and cysteine 570–cysteine 598. 2 N-linked (GlcNAc...) asparagine glycosylation sites follow: asparagine 90 and asparagine 126. Asparagine 297 carries an N-linked (GlcNAc...) asparagine glycan. The 233-residue stretch at 390–622 folds into the Peptidase S1 domain; the sequence is VVGGAASVHG…YVDWILEKTQ (233 aa). Catalysis depends on histidine 430, which acts as the Charge relay system. N-linked (GlcNAc...) asparagine glycosylation is present at asparagine 449. Aspartate 479 functions as the Charge relay system in the catalytic mechanism. Asparagine 490 is a glycosylation site (N-linked (GlcNAc...) asparagine). Position 547-550 (547-550) interacts with heparin; that stretch reads RYRR. Serine 574 acts as the Charge relay system in catalysis.

The protein belongs to the peptidase S1 family. Plasma kallikrein subfamily. Homodimer; disulfide-linked. After activation the heavy and light chains are also linked by a disulfide bond. Interacts (activated) with F9 (inactive and activated) in calcium-dependent manner. Forms a heterodimer with SERPINA5. Post-translationally, activated by factor XIIa (or XII), which cleaves each polypeptide after Arg-389 into the light chain, which contains the active site, and the heavy chain, which associates with high molecular weight (HMW) kininogen. Activated by F12 (activated); the presence of negatively charged surfaces accelerates activation. Activated by F2 (thrombin); the presence of negatively charged surfaces, such as polyphosphate and dextran sulfate, strongly accelerates activation. Autoactivated; the presence of negatively charged surfaces, such as polyphosphate and dextran sulfate, accelerates autoactivation and autolysis. N-glycosylated on both chains. N-glycosylated sites mainly consist of nonfucosylated sialylated biantennary (in high abundance) and/or triantennary (in low abundance) complex structures.

It is found in the secreted. The enzyme catalyses Selective cleavage of Arg-|-Ala and Arg-|-Val bonds in factor IX to form factor IXa.. With respect to regulation, inhibited by SERPINA5. Its function is as follows. Factor XI triggers the middle phase of the intrinsic pathway of blood coagulation by activating factor IX. This is Coagulation factor XI (F11) from Mus musculus (Mouse).